Reading from the N-terminus, the 370-residue chain is 4-hydroxy-3-methylbut-2-en-1-yl diphosphate synthase (flavodoxin) (370 aa).

[4Fe-4S] cluster is bound by residues Cys-268, Cys-271, Cys-303, and Glu-310.

The protein belongs to the IspG family. [4Fe-4S] cluster is required as a cofactor.

The catalysed reaction is (2E)-4-hydroxy-3-methylbut-2-enyl diphosphate + oxidized [flavodoxin] + H2O + 2 H(+) = 2-C-methyl-D-erythritol 2,4-cyclic diphosphate + reduced [flavodoxin]. It functions in the pathway isoprenoid biosynthesis; isopentenyl diphosphate biosynthesis via DXP pathway; isopentenyl diphosphate from 1-deoxy-D-xylulose 5-phosphate: step 5/6. In terms of biological role, converts 2C-methyl-D-erythritol 2,4-cyclodiphosphate (ME-2,4cPP) into 1-hydroxy-2-methyl-2-(E)-butenyl 4-diphosphate. This chain is 4-hydroxy-3-methylbut-2-en-1-yl diphosphate synthase (flavodoxin), found in Bacillus anthracis (strain A0248).